The primary structure comprises 460 residues: Tubby-related protein 3 (460 aa).

Disordered regions lie at residues 37-132 (KKQR…ETAP) and 151-193 (YDEE…GVTA). Residues 151–162 (YDEEPDKEEDEG) show a composition bias toward acidic residues. Low complexity predominate over residues 166 to 188 (SSPSARSEESAAASQKAASETGA).

It belongs to the TUB family. In terms of assembly, associates with the IFT complex A (IFT-A). Interacts with SIRT1. In terms of tissue distribution, widely expressed including eyes and adipose depots.

The protein localises to the nucleus. It localises to the cell membrane. It is found in the cell projection. Its subcellular location is the cilium. The protein resides in the cytoplasm. The protein localises to the secreted. Functionally, negative regulator of the Shh signaling transduction pathway: recruited to primary cilia via association with the IFT complex A (IFT-A) and is required for recruitment of G protein-coupled receptor GPR161 to cilia, a promoter of PKA-dependent basal repression machinery in Shh signaling. Binds to phosphorylated inositide (phosphoinositide) lipids. Both IFT-A- and phosphoinositide-binding properties are required to regulate ciliary G protein-coupled receptor trafficking. During adipogenesis, regulates ciliary trafficking of FFAR4 in preadipocytes. The protein is Tubby-related protein 3 of Mus musculus (Mouse).